The chain runs to 166 residues: Regulator of ribonuclease activity A (166 aa).

Belongs to the RraA family. In terms of assembly, homotrimer. Binds to both RNA-binding sites in the C-terminal region of Rne and to RhlB.

The protein resides in the cytoplasm. Functionally, globally modulates RNA abundance by binding to RNase E (Rne) and regulating its endonucleolytic activity. Can modulate Rne action in a substrate-dependent manner by altering the composition of the degradosome. Modulates RNA-binding and helicase activities of the degradosome. This is Regulator of ribonuclease activity A from Mannheimia succiniciproducens (strain KCTC 0769BP / MBEL55E).